The sequence spans 754 residues: Neprilysin-1 (754 aa).

The chain crosses the membrane as a helical; Signal-anchor for type II membrane protein span at residues 5–27; the sequence is FGPPIVFLISCYALILCGTVDAL. N-linked (GlcNAc...) asparagine glycosylation is found at Asn-38, Asn-81, Asn-132, Asn-217, Asn-273, Asn-303, and Asn-441. Positions 63–754 constitute a Peptidase M13 domain; that stretch reads VGDSEGYQEA…MNPTKRCVVW (692 aa). 4 cysteine pairs are disulfide-bonded: Cys-87–Cys-739, Cys-95–Cys-699, Cys-151–Cys-414, and Cys-624–Cys-751. His-587 lines the Zn(2+) pocket. Glu-588 is a catalytic residue. His-591 is a binding site for Zn(2+). N-linked (GlcNAc...) asparagine glycosylation occurs at Asn-612. Glu-649 provides a ligand contact to Zn(2+). Residue Asp-653 is the Proton donor of the active site.

It belongs to the peptidase M13 family. Zn(2+) is required as a cofactor. As to expression, specifically expressed in pharyngeal cells and a single head neuron.

It is found in the membrane. In terms of biological role, probable cell surface protease. Required to control the neuronal innervation of pharyngeal pumping. The chain is Neprilysin-1 (nep-1) from Caenorhabditis elegans.